The chain runs to 213 residues: MKSLQALFGGTFDPVHYGHLKPVETLANLIGLTRVTIIPNNVPPHRPQPEANSVQRKHMLELAIANKPLFTLDERELKRNAPSYTAQTLKEWRQEQGPDVPLAFIIGQDSLLTFPTWYEYETILDNAHLIVCRRPGYPLEMAQPQYQQWLEDHLTHNQEDLHLQPAGKIYLAETPWFNISATIIRERLQNGESCEDLLPEPVLTYINQQGLYR.

This sequence belongs to the NadD family.

The catalysed reaction is nicotinate beta-D-ribonucleotide + ATP + H(+) = deamido-NAD(+) + diphosphate. The protein operates within cofactor biosynthesis; NAD(+) biosynthesis; deamido-NAD(+) from nicotinate D-ribonucleotide: step 1/1. In terms of biological role, catalyzes the reversible adenylation of nicotinate mononucleotide (NaMN) to nicotinic acid adenine dinucleotide (NaAD). This chain is Probable nicotinate-nucleotide adenylyltransferase, found in Shigella boydii serotype 4 (strain Sb227).